Consider the following 80-residue polypeptide: Exodeoxyribonuclease 7 small subunit (80 aa).

The protein belongs to the XseB family. As to quaternary structure, heterooligomer composed of large and small subunits.

The protein resides in the cytoplasm. The catalysed reaction is Exonucleolytic cleavage in either 5'- to 3'- or 3'- to 5'-direction to yield nucleoside 5'-phosphates.. Functionally, bidirectionally degrades single-stranded DNA into large acid-insoluble oligonucleotides, which are then degraded further into small acid-soluble oligonucleotides. This chain is Exodeoxyribonuclease 7 small subunit, found in Pseudoalteromonas translucida (strain TAC 125).